A 1300-amino-acid chain; its full sequence is Insulin receptor-related protein (1300 aa).

A signal peptide spans 1 to 26 (MAVPALWPWGVHLLMSLLSLGSGLDT). 2 N-linked (GlcNAc...) asparagine glycosylation sites follow: N47 and N100. Cystine bridges form between C214–C222, C216–C228, C229–C237, C233–C246, C249–C258, C262–C274, C280–C300, C304–C317, and C320–C324. N311 carries N-linked (GlcNAc...) asparagine glycosylation. N-linked (GlcNAc...) asparagine glycans are attached at residues N411, N492, N528, N616, N634, N756, N885, and N898. Fibronectin type-III domains follow at residues 483-603 (QTRT…TLPA) and 607-707 (VPQD…AQEV). The cysteines at positions 657 and 864 are disulfide-linked. Residues 747-921 (EAGLLRLGKN…LEEEDTGGMR (175 aa)) lie on the Extracellular side of the membrane. The region spanning 818 to 913 (IPGKVAWKAA…GVTFYITDLE (96 aa)) is the Fibronectin type-III 3 domain. A helical membrane pass occupies residues 922-943 (IFLTVTPVGFMLLVTLAALGFF). Over 944–1300 (YSRKRNSTLY…YSAPNGGPGH (357 aa)) the chain is Cytoplasmic. Residues 979–1254 (IAIIRELGQG…RIQDELRPSF (276 aa)) enclose the Protein kinase domain. Residues 985–993 (LGQGSFGMV) and K1013 each bind ATP. D1115 acts as the Proton acceptor in catalysis. Phosphotyrosine; by autocatalysis occurs at positions 1145 and 1146. Residues 1273-1300 (LPTEAEPDSPPTLNGASDYSAPNGGPGH) are disordered.

The protein belongs to the protein kinase superfamily. Tyr protein kinase family. Insulin receptor subfamily. Probable tetramer of 2 alpha and 2 beta chains linked by disulfide bonds. The alpha chains contribute to the formation of the ligand-binding domain, while the beta chains carry the kinase domain. Post-translationally, autophosphorylated on tyrosine residues between pH 7.9 and pH 10.5. As to expression, highly expressed in the islets as well as in pancreatic beta-cells.

It localises to the membrane. The enzyme catalyses L-tyrosyl-[protein] + ATP = O-phospho-L-tyrosyl-[protein] + ADP + H(+). Receptor with tyrosine-protein kinase activity. Functions as a pH sensing receptor which is activated by increased extracellular pH. Activates an intracellular signaling pathway that involves IRS1 and AKT1/PKB. The sequence is that of Insulin receptor-related protein (Insrr) from Mus musculus (Mouse).